A 236-amino-acid polypeptide reads, in one-letter code: ATP-dependent dethiobiotin synthetase BioD (236 aa).

Position 19 (T19) interacts with Mg(2+). Residue K40 is part of the active site. Residues D61 and E122 each contribute to the Mg(2+) site. Residues D61, 122-125 (EGVG), 182-183 (NT), and 211-213 (PRL) each bind ATP.

This sequence belongs to the dethiobiotin synthetase family. In terms of assembly, homodimer. Mg(2+) is required as a cofactor.

It is found in the cytoplasm. The enzyme catalyses (7R,8S)-7,8-diammoniononanoate + CO2 + ATP = (4R,5S)-dethiobiotin + ADP + phosphate + 3 H(+). The protein operates within cofactor biosynthesis; biotin biosynthesis; biotin from 7,8-diaminononanoate: step 1/2. In terms of biological role, catalyzes a mechanistically unusual reaction, the ATP-dependent insertion of CO2 between the N7 and N8 nitrogen atoms of 7,8-diaminopelargonic acid (DAPA, also called 7,8-diammoniononanoate) to form a ureido ring. The protein is ATP-dependent dethiobiotin synthetase BioD of Janthinobacterium sp. (strain Marseille) (Minibacterium massiliensis).